Consider the following 112-residue polypeptide: MALAKAKETVASAPVVVYSKSYCPFCVRVKKLFEQLGATFKAIELDGESDGSELQSALAEWTGQRTVPNVFINGKHIGGCDDTLALNNEGKLVPLLTEAGAIASSAKTTITA.

Positions 3-103 constitute a Glutaredoxin domain; that stretch reads LAKAKETVAS…PLLTEAGAIA (101 aa). C23 and C26 are joined by a disulfide.

The protein belongs to the glutaredoxin family. CPYC subfamily. In terms of processing, the N-terminus is blocked. As to expression, expressed in aleurone layer.

It is found in the cytoplasm. Functionally, has a glutathione-disulfide oxidoreductase activity in the presence of NADPH and glutathione reductase. Reduces low molecular weight disulfides and proteins. Possesses thioltransferase, dehydroascorbate reductase and GSH-dependent peroxidase activities in vitro. This is Glutaredoxin-C6 (GRXC6) from Oryza sativa subsp. japonica (Rice).